Consider the following 431-residue polypeptide: Na(+)-translocating NADH-quinone reductase subunit F (431 aa).

Residues 10 to 30 (ISIASLVFCVIGLILSGIILI) traverse the membrane as a helical segment. The 93-residue stretch at 41-133 (CKLKINDDDS…DMCLEIEERY (93 aa)) folds into the 2Fe-2S ferredoxin-type domain. Residues C76, C82, C85, and C117 each contribute to the [2Fe-2S] cluster site. Positions 136 to 286 (ASSWEGTVVS…SGPYGESFMK (151 aa)) constitute an FAD-binding FR-type domain.

This sequence belongs to the NqrF family. Composed of six subunits; NqrA, NqrB, NqrC, NqrD, NqrE and NqrF. [2Fe-2S] cluster is required as a cofactor. It depends on FAD as a cofactor.

It localises to the cell inner membrane. It catalyses the reaction a ubiquinone + n Na(+)(in) + NADH + H(+) = a ubiquinol + n Na(+)(out) + NAD(+). In terms of biological role, NQR complex catalyzes the reduction of ubiquinone-1 to ubiquinol by two successive reactions, coupled with the transport of Na(+) ions from the cytoplasm to the periplasm. The first step is catalyzed by NqrF, which accepts electrons from NADH and reduces ubiquinone-1 to ubisemiquinone by a one-electron transfer pathway. This Chlamydia caviae (strain ATCC VR-813 / DSM 19441 / 03DC25 / GPIC) (Chlamydophila caviae) protein is Na(+)-translocating NADH-quinone reductase subunit F.